Reading from the N-terminus, the 248-residue chain is Triosephosphate isomerase (248 aa).

Residues Asn12 and Lys14 each contribute to the substrate site. An igE-binding region spans residues 16 to 30 (NGDRAGIDSIISFMK). His95 acts as the Electrophile in catalysis. The Proton acceptor role is filled by Glu165. IgE-binding stretches follow at residues 166–180 (PVWA…TPEQ) and 205–219 (RIIY…NCKE).

The protein belongs to the triosephosphate isomerase family. In terms of assembly, homodimer. In terms of tissue distribution, expressed in skeletal muscle (at protein level).

The protein localises to the cytoplasm. It catalyses the reaction D-glyceraldehyde 3-phosphate = dihydroxyacetone phosphate. The catalysed reaction is dihydroxyacetone phosphate = methylglyoxal + phosphate. The protein operates within carbohydrate biosynthesis; gluconeogenesis. It functions in the pathway carbohydrate degradation; glycolysis; D-glyceraldehyde 3-phosphate from glycerone phosphate: step 1/1. Triosephosphate isomerase is an extremely efficient metabolic enzyme that catalyzes the interconversion between dihydroxyacetone phosphate (DHAP) and D-glyceraldehyde-3-phosphate (G3P) in glycolysis and gluconeogenesis. In terms of biological role, it is also responsible for the non-negligible production of methylglyoxal a reactive cytotoxic side-product that modifies and can alter proteins, DNA and lipids. The protein is Triosephosphate isomerase of Procambarus clarkii (Red swamp crayfish).